The primary structure comprises 410 residues: Tyrosine--tRNA ligase (410 aa).

Residue tyrosine 36 coordinates L-tyrosine. The 'HIGH' region motif lies at alanine 41–histidine 50. L-tyrosine-binding residues include tyrosine 169 and glutamine 173. The 'KMSKS' region motif lies at lysine 229–threonine 233. Lysine 232 is an ATP binding site. In terms of domain architecture, S4 RNA-binding spans isoleucine 343–alanine 409.

Belongs to the class-I aminoacyl-tRNA synthetase family. TyrS type 1 subfamily. In terms of assembly, homodimer.

It localises to the cytoplasm. It carries out the reaction tRNA(Tyr) + L-tyrosine + ATP = L-tyrosyl-tRNA(Tyr) + AMP + diphosphate + H(+). In terms of biological role, catalyzes the attachment of tyrosine to tRNA(Tyr) in a two-step reaction: tyrosine is first activated by ATP to form Tyr-AMP and then transferred to the acceptor end of tRNA(Tyr). This chain is Tyrosine--tRNA ligase, found in Lachnoclostridium phytofermentans (strain ATCC 700394 / DSM 18823 / ISDg) (Clostridium phytofermentans).